A 603-amino-acid polypeptide reads, in one-letter code: UvrABC system protein C (603 aa).

Positions 15–92 constitute a GIY-YIG domain; sequence DQPGCYLMKD…IKKHDPRFNI (78 aa). Residues 197-232 enclose the UVR domain; the sequence is KTVKNDLMKKMQEAAENMEFEKAGEFRDQINAIETT.

This sequence belongs to the UvrC family. Interacts with UvrB in an incision complex.

Its subcellular location is the cytoplasm. Its function is as follows. The UvrABC repair system catalyzes the recognition and processing of DNA lesions. UvrC both incises the 5' and 3' sides of the lesion. The N-terminal half is responsible for the 3' incision and the C-terminal half is responsible for the 5' incision. The chain is UvrABC system protein C from Listeria monocytogenes serotype 4a (strain HCC23).